The sequence spans 212 residues: Kynurenine formamidase (212 aa).

W18 is a substrate binding site. 3 residues coordinate Zn(2+): H48, H52, and D54. H58 acts as the Proton donor/acceptor in catalysis. The Zn(2+) site is built by H160 and E172.

Belongs to the Cyclase 1 superfamily. KynB family. As to quaternary structure, homodimer. It depends on Zn(2+) as a cofactor.

It carries out the reaction N-formyl-L-kynurenine + H2O = L-kynurenine + formate + H(+). It functions in the pathway amino-acid degradation; L-tryptophan degradation via kynurenine pathway; L-kynurenine from L-tryptophan: step 2/2. Functionally, catalyzes the hydrolysis of N-formyl-L-kynurenine to L-kynurenine, the second step in the kynurenine pathway of tryptophan degradation. This is Kynurenine formamidase from Paraburkholderia phytofirmans (strain DSM 17436 / LMG 22146 / PsJN) (Burkholderia phytofirmans).